The sequence spans 480 residues: Glutamate--tRNA ligase (480 aa).

The 'HIGH' region signature appears at Pro-21–Gly-31. Residues Cys-110, Cys-112, Cys-137, and His-139 each contribute to the Zn(2+) site. The short motif at Lys-248 to Arg-252 is the 'KMSKS' region element. An ATP-binding site is contributed by Lys-251.

It belongs to the class-I aminoacyl-tRNA synthetase family. Glutamate--tRNA ligase type 1 subfamily. As to quaternary structure, monomer. Zn(2+) serves as cofactor.

It localises to the cytoplasm. The enzyme catalyses tRNA(Glu) + L-glutamate + ATP = L-glutamyl-tRNA(Glu) + AMP + diphosphate. In terms of biological role, catalyzes the attachment of glutamate to tRNA(Glu) in a two-step reaction: glutamate is first activated by ATP to form Glu-AMP and then transferred to the acceptor end of tRNA(Glu). The chain is Glutamate--tRNA ligase from Histophilus somni (strain 2336) (Haemophilus somnus).